Consider the following 1771-residue polypeptide: Atrochrysone carboxylic acid synthase (1771 aa).

The N-terminal acylcarrier protein transacylase domain (SAT) stretch occupies residues 38-269 (HLHSKDRRHH…SLPVFGGLCH (232 aa)). One can recognise a Ketosynthase family 3 (KS3) domain in the interval 402–836 (QSKIAIVGMS…GGNTSVVLEE (435 aa)). Residues Cys575, His711, and His754 each act as for beta-ketoacyl synthase activity in the active site. The segment at 937-1257 (FAFTGQGASY…LSSLHCAGVE (321 aa)) is malonyl-CoA:ACP transacylase (MAT) domain. The segment at 1322-1641 (TSTVQKIVEE…RLLLNRFFSP (320 aa)) is product template (PT) domain. Residues 1326-1461 (QKIVEESFDG…AKIYYCDASE (136 aa)) form an N-terminal hotdog fold region. The PKS/mFAS DH domain occupies 1326-1636 (QKIVEESFDG…FRRYPRLLLN (311 aa)). His1358 (proton acceptor; for dehydratase activity) is an active-site residue. A C-terminal hotdog fold region spans residues 1488–1636 (IANRFSGRMA…FRRYPRLLLN (149 aa)). Asp1547 acts as the Proton donor; for dehydratase activity in catalysis. Over residues 1668 to 1681 (AATSTTSTTSTAST) the composition is skewed to low complexity. Residues 1668–1695 (AATSTTSTTSTASTGQPPKVDETSPVDS) form a disordered region. Residues 1693-1770 (VDSNSTAARA…DLKSWLLEYY (78 aa)) form the Carrier domain. At Ser1730 the chain carries O-(pantetheine 4'-phosphoryl)serine.

The catalysed reaction is holo-[ACP] + 8 malonyl-CoA + 8 H(+) = atrochrysone carboxyl-[ACP] + 8 CO2 + 8 CoA + 2 H2O. It functions in the pathway secondary metabolite biosynthesis. Functionally, non-reducing polyketide synthase; part of the gene cluster that mediates the biosynthesis of geodin, an intermediate in the biosynthesis of other natural products. The pathway begins with the synthesis of atrochrysone thioester by the polyketide synthase (PKS) gedC. The atrochrysone carboxyl ACP thioesterase gedB then breaks the thioester bond and releases the atrochrysone carboxylic acid from gedC. The atrochrysone carboxylic acid is then converted to atrochrysone which is further transformed into emodinanthrone. The next step is performed by the emodinanthrone oxygenase gedH that catalyzes the oxidation of emodinanthrone to emodin. Emodin O-methyltransferase encoded probably by gedA then catalyzes methylation of the 8-hydroxy group of emodin to form questin. Ring cleavage of questin by questin oxidase gedK leads to desmethylsulochrin via several intermediates including questin epoxide. Another methylation step probably catalyzed by methyltransferase gedG leads to the formation of sulochrin which is further converted to dihydrogeodin by the sulochrin halogenase gedL. Finally, the dihydrogeodin oxidase gedJ catalyzes the stereospecific phenol oxidative coupling reaction converting dihydrogeodin to geodin. The chain is Atrochrysone carboxylic acid synthase from Aspergillus terreus (strain NIH 2624 / FGSC A1156).